Reading from the N-terminus, the 225-residue chain is 3-dehydroquinate dehydratase (225 aa).

3-dehydroquinate is bound by residues 30-32 and Arg-62; that span reads EWR. His-118 acts as the Proton donor/acceptor in catalysis. The Schiff-base intermediate with substrate role is filled by Lys-143. Residues Arg-186, Ser-205, and Gln-209 each contribute to the 3-dehydroquinate site.

The protein belongs to the type-I 3-dehydroquinase family. As to quaternary structure, homodimer.

It carries out the reaction 3-dehydroquinate = 3-dehydroshikimate + H2O. The protein operates within metabolic intermediate biosynthesis; chorismate biosynthesis; chorismate from D-erythrose 4-phosphate and phosphoenolpyruvate: step 3/7. Its function is as follows. Involved in the third step of the chorismate pathway, which leads to the biosynthesis of aromatic amino acids. Catalyzes the cis-dehydration of 3-dehydroquinate (DHQ) and introduces the first double bond of the aromatic ring to yield 3-dehydroshikimate. This Streptococcus thermophilus (strain ATCC BAA-491 / LMD-9) protein is 3-dehydroquinate dehydratase.